The following is a 284-amino-acid chain: Tropomyosin (284 aa).

Positions 1 to 284 form a coiled coil; it reads MDAIKKKMQA…DQTFAEIAGY (284 aa). A disordered region spans residues 103–133; it reads EEKLATTTEKLEEASKAADESERNRKVLEGR.

This sequence belongs to the tropomyosin family. As to quaternary structure, homodimer.

Functionally, tropomyosin, in association with the troponin complex, plays a central role in the calcium dependent regulation of muscle contraction. The chain is Tropomyosin from Chlamys nipponensis akazara (Akazara scallop).